The following is a 126-amino-acid chain: Large ribosomal subunit protein uL29 (126 aa).

This sequence belongs to the universal ribosomal protein uL29 family.

This Dictyostelium discoideum (Social amoeba) protein is Large ribosomal subunit protein uL29 (rpl35).